The chain runs to 346 residues: Small ribosomal subunit biogenesis GTPase RsgA 2 (346 aa).

A CP-type G domain is found at 93–248 (EEQLIAANFD…VIDTPGMREF (156 aa)). GTP-binding positions include 138 to 141 (TKAD) and 190 to 198 (GSSGVGKSS). Residues C271, C276, H278, and C284 each coordinate Zn(2+).

The protein belongs to the TRAFAC class YlqF/YawG GTPase family. RsgA subfamily. Monomer. Associates with 30S ribosomal subunit, binds 16S rRNA. Requires Zn(2+) as cofactor.

The protein localises to the cytoplasm. Its function is as follows. One of several proteins that assist in the late maturation steps of the functional core of the 30S ribosomal subunit. Helps release RbfA from mature subunits. May play a role in the assembly of ribosomal proteins into the subunit. Circularly permuted GTPase that catalyzes slow GTP hydrolysis, GTPase activity is stimulated by the 30S ribosomal subunit. The protein is Small ribosomal subunit biogenesis GTPase RsgA 2 of Listeria monocytogenes serotype 4b (strain F2365).